A 176-amino-acid chain; its full sequence is Shikimate kinase (176 aa).

17 to 24 (GMMGVGKS) is a binding site for ATP.

The protein belongs to the shikimate kinase family.

Its subcellular location is the cytoplasm. It carries out the reaction shikimate + ATP = 3-phosphoshikimate + ADP + H(+). It functions in the pathway metabolic intermediate biosynthesis; chorismate biosynthesis; chorismate from D-erythrose 4-phosphate and phosphoenolpyruvate: step 5/7. The chain is Shikimate kinase from Zymomonas mobilis subsp. mobilis (strain ATCC 31821 / ZM4 / CP4).